The chain runs to 757 residues: Endonuclease MutS2 (757 aa).

321–328 provides a ligand contact to ATP; that stretch reads GPNMGGKT. In terms of domain architecture, Smr spans 681–756; sequence IDIRGMTVEE…GTGVTVVEVK (76 aa).

It belongs to the DNA mismatch repair MutS family. MutS2 subfamily. Homodimer. Binds to stalled ribosomes, contacting rRNA.

Its function is as follows. Endonuclease that is involved in the suppression of homologous recombination and thus may have a key role in the control of bacterial genetic diversity. In terms of biological role, acts as a ribosome collision sensor, splitting the ribosome into its 2 subunits. Detects stalled/collided 70S ribosomes which it binds and splits by an ATP-hydrolysis driven conformational change. Acts upstream of the ribosome quality control system (RQC), a ribosome-associated complex that mediates the extraction of incompletely synthesized nascent chains from stalled ribosomes and their subsequent degradation. Probably generates substrates for RQC. This chain is Endonuclease MutS2, found in Thermotoga sp. (strain RQ2).